The chain runs to 128 residues: Fluoride-specific ion channel FluC (128 aa).

Helical transmembrane passes span 3–23 (LYAL…RWWF), 33–53 (TLPL…GAAI), 69–89 (FAIT…AETV), and 99–119 (WTFV…ILGI). Na(+) is bound by residues G76 and T79.

The protein belongs to the fluoride channel Fluc/FEX (TC 1.A.43) family.

It localises to the cell inner membrane. It carries out the reaction fluoride(in) = fluoride(out). Na(+) is not transported, but it plays an essential structural role and its presence is essential for fluoride channel function. Functionally, fluoride-specific ion channel. Important for reducing fluoride concentration in the cell, thus reducing its toxicity. The polypeptide is Fluoride-specific ion channel FluC (Nitrosospira multiformis (strain ATCC 25196 / NCIMB 11849 / C 71)).